We begin with the raw amino-acid sequence, 571 residues long: PR domain zinc finger protein 14 (571 aa).

Ser79 carries the phosphoserine modification. A disordered region spans residues 129 to 191; the sequence is LGHQIIGGDN…PKPSNQEGKS (63 aa). Positions 165–176 are enriched in polar residues; sequence RTSQLLPCSPSK. Residues 194 to 384 are interaction with CBFA2T2; it reads RFQFTEEDLH…DIPVSLQVTE (191 aa). Residues 251–367 enclose the SET domain; it reads EGLCLMQTVF…QNQELLVWYG (117 aa). The segment at 400–424 adopts a C2H2-type 1; atypical zinc-finger fold; it reads YRCERCGKVFTYKYYRDKHLKYTPC. C2H2-type zinc fingers lie at residues 432–455, 461–483, 489–511, 517–540, and 546–568; these read FPCSLCKRSFEKRDRLRIHILHVH, HKCSTCGKCFSQSSSLNKHMRVH, YQCVYCTKRFTASSILRTHIRQH, FKCKYCGKSFASHAAHDSHVRRSH, and CSCSICGKIFSDQETFYSHMKFH.

It belongs to the class V-like SAM-binding methyltransferase superfamily. In terms of assembly, interacts with CBFA2T2. Expressed in embryonic stem cells. Tends to be overexpressed in breast cancer (at protein level).

The protein localises to the nucleus. Functionally, transcription factor that has both positive and negative roles on transcription. Required for the maintenance of embryonic stem cell identity and the reacquisition of pluripotency in somatic cells. May play an essential role in germ cell development at 2 levels: the reacquisition of potential pluripotency, including SOX2 up-regulation, and successful epigenetic reprogramming, characterized by EHMT1 repression. Its association with CBFA2T2 is required for the functions in pluripotency and germ cell formation. Directly up-regulates the expression of pluripotency gene POU5F1 through its proximal enhancer. Binds to the DNA consensus sequence 5'-GGTC[TC]CTAA-3'. The polypeptide is PR domain zinc finger protein 14 (PRDM14) (Homo sapiens (Human)).